We begin with the raw amino-acid sequence, 251 residues long: Probable transcriptional regulatory protein CC_3243 (251 aa).

This sequence belongs to the TACO1 family.

It localises to the cytoplasm. The polypeptide is Probable transcriptional regulatory protein CC_3243 (Caulobacter vibrioides (strain ATCC 19089 / CIP 103742 / CB 15) (Caulobacter crescentus)).